We begin with the raw amino-acid sequence, 289 residues long: Protease HtpX (289 aa).

The next 2 helical transmembrane spans lie at 6–26 (ILFLLTNLAITFVLGIVLNII) and 38–58 (TGILMMSLLFGFTGSLISLFM). H144 serves as a coordination point for Zn(2+). Residue E145 is part of the active site. Residue H148 coordinates Zn(2+). 2 helical membrane-spanning segments follow: residues 152 to 172 (GDMVTMTLLQGVLNTFVIFLS) and 194 to 214 (LVFWVVDIALQMIFGILATMI). E223 serves as a coordination point for Zn(2+).

It belongs to the peptidase M48B family. Zn(2+) is required as a cofactor.

The protein localises to the cell inner membrane. The chain is Protease HtpX from Haemophilus ducreyi (strain 35000HP / ATCC 700724).